The chain runs to 298 residues: N-acetylmuramic acid 6-phosphate etherase (298 aa).

Residues 54–217 (TIKAMKQGGR…STTVMIGLGK (164 aa)) enclose the SIS domain. Glutamate 82 serves as the catalytic Proton donor. The active site involves glutamate 113.

This sequence belongs to the GCKR-like family. MurNAc-6-P etherase subfamily. In terms of assembly, homodimer.

It carries out the reaction N-acetyl-D-muramate 6-phosphate + H2O = N-acetyl-D-glucosamine 6-phosphate + (R)-lactate. It functions in the pathway amino-sugar metabolism; N-acetylmuramate degradation. Specifically catalyzes the cleavage of the D-lactyl ether substituent of MurNAc 6-phosphate, producing GlcNAc 6-phosphate and D-lactate. The chain is N-acetylmuramic acid 6-phosphate etherase from Halalkalibacterium halodurans (strain ATCC BAA-125 / DSM 18197 / FERM 7344 / JCM 9153 / C-125) (Bacillus halodurans).